The following is a 246-amino-acid chain: MAGHSKWANIQHRKGRQDAARSKLFSKFSKEITVAAKMGDPDPDKNPRLRLAIKEAKSQSMPKDNIERAIKKAIGGDGDAYEEIRYEGYGPNGVAVIVEAMTDNRNRTASNVRSTFTKHGGNLGETGSVGFMFERKGEVVYPASVGDADTVMMAAIEAGAEDVESSEEGHVIWCADTDLNEVSTALEAELGESDSTKLVWKPSTTTELDLEAMQKLMKLVDALEDDDDVQRVTTNFEASDEVMAAL.

Positions 1-22 (MAGHSKWANIQHRKGRQDAARS) are disordered.

It belongs to the TACO1 family.

It localises to the cytoplasm. In Ruegeria pomeroyi (strain ATCC 700808 / DSM 15171 / DSS-3) (Silicibacter pomeroyi), this protein is Probable transcriptional regulatory protein SPO1072.